Here is a 154-residue protein sequence, read N- to C-terminus: Endoribonuclease YbeY (154 aa).

Zn(2+)-binding residues include H114, H118, and H124.

It belongs to the endoribonuclease YbeY family. Zn(2+) serves as cofactor.

It is found in the cytoplasm. Single strand-specific metallo-endoribonuclease involved in late-stage 70S ribosome quality control and in maturation of the 3' terminus of the 16S rRNA. The protein is Endoribonuclease YbeY of Marinomonas sp. (strain MWYL1).